The following is an 815-amino-acid chain: Tubulin polyglutamylase TTLL13 (815 aa).

Residues 85-430 (RRSLAINLTN…RGCDKRKVME (346 aa)) form the TTL domain. ATP-binding positions include lysine 202, 208 to 209 (QG), 230 to 233 (QQYI), and 243 to 245 (KFD). Residue glutamine 208 participates in a protein binding. Residue arginine 269 coordinates L-glutamate. 291 to 292 (TN) is a binding site for ATP. Tyrosine 293 and lysine 311 together coordinate L-glutamate. Residues aspartate 376, glutamate 389, and asparagine 391 each contribute to the Mg(2+) site. The interval 401 to 482 (CLDQEVKDAL…LGKYRRIYPG (82 aa)) is c-MTBD region. Lysine 407 contributes to the L-glutamate binding site. Residues 504 to 528 (ASKAREECARQQLEEIRLKQEQQET) are a coiled coil. The tract at residues 520–556 (RLKQEQQETSGTKRQKARDQNQGESAGEKSRPRAGLQ) is disordered. Basic and acidic residues predominate over residues 536 to 550 (ARDQNQGESAGEKSR).

The protein belongs to the tubulin--tyrosine ligase family. The cofactor is Mg(2+).

It carries out the reaction (L-glutamyl)(n)-gamma-L-glutamyl-L-glutamyl-[protein] + L-glutamate + ATP = (L-glutamyl)(n+1)-gamma-L-glutamyl-L-glutamyl-[protein] + ADP + phosphate + H(+). In terms of biological role, polyglutamylase which modifies tubulin, generating polyglutamate side chains of variable lengths on the gamma-carboxyl group of specific glutamate residues within the C-terminal tail of tubulin. Mediates ATP-dependent polyglutamate side-chain elongation of the polyglutamylation reaction but not the initiation step. Preferentially modifies the alpha-tubulin tail over a beta-tail. This Homo sapiens (Human) protein is Tubulin polyglutamylase TTLL13.